We begin with the raw amino-acid sequence, 296 residues long: Sulfotransferase 1C2 (296 aa).

49–54 (KAGTTW) is a 3'-phosphoadenylyl sulfate binding site. Position 107–109 (107–109 (KTH)) interacts with substrate. The active-site Proton acceptor is the His109. 3'-phosphoadenylyl sulfate is bound by residues Arg131, Ser139, Tyr194, and 228 to 233 (TSFEKM). Ser139 carries the post-translational modification Phosphoserine. A Phosphoserine modification is found at Ser254. Residue 256–260 (FMRKG) coordinates 3'-phosphoadenylyl sulfate.

This sequence belongs to the sulfotransferase 1 family. In terms of tissue distribution, found in adult stomach, kidney and thyroid gland, and in fetal kidney and liver.

It is found in the cytoplasm. Its subcellular location is the lysosome. The protein resides in the mitochondrion. The enzyme catalyses a phenol + 3'-phosphoadenylyl sulfate = an aryl sulfate + adenosine 3',5'-bisphosphate + H(+). The catalysed reaction is cholesterol + 3'-phosphoadenylyl sulfate = cholesterol sulfate + adenosine 3',5'-bisphosphate + H(+). In terms of biological role, sulfotransferase that utilizes 3'-phospho-5'-adenylyl sulfate (PAPS) to catalyze the sulfate conjugation of phenolic compounds. Does not transfer sulfate to steroids, dopamine, acetaminophen, or alpha-naphthol. Except in mitochondria, where it can add sulfate to cholesterol producing cholesterol sulfate, which alters mitochondrial membrane organization, and impacts protein complex mobility increasing state-III respiration, thereby modulating mitochondrial respiration. Catalyzes the sulfation of the carcinogenic N-hydroxy-2-acetylaminofluorene leading to highly reactive intermediates capable of forming DNA adducts, potentially resulting in mutagenesis. This is Sulfotransferase 1C2 (SULT1C2) from Homo sapiens (Human).